A 431-amino-acid polypeptide reads, in one-letter code: Na(+)-translocating NADH-quinone reductase subunit F (431 aa).

The chain crosses the membrane as a helical span at residues 9–29; it reads FICIASLIFCAIGVILAGVIL. The region spanning 39–133 is the 2Fe-2S ferredoxin-type domain; it reads HPCKLKINDN…DMSLEIEERY (95 aa). Residues cysteine 76, cysteine 82, cysteine 85, and cysteine 117 each contribute to the [2Fe-2S] cluster site. In terms of domain architecture, FAD-binding FR-type spans 136-286; it reads ASSWEGTVIS…SGPYGESFMK (151 aa). The tract at residues 289–413 is catalytic; sequence DRPLIFLIGG…PLHNSSILKL (125 aa).

Belongs to the NqrF family. Composed of six subunits; NqrA, NqrB, NqrC, NqrD, NqrE and NqrF. The cofactor is [2Fe-2S] cluster. Requires FAD as cofactor.

It localises to the cell inner membrane. The catalysed reaction is a ubiquinone + n Na(+)(in) + NADH + H(+) = a ubiquinol + n Na(+)(out) + NAD(+). Its function is as follows. NQR complex catalyzes the reduction of ubiquinone-1 to ubiquinol by two successive reactions, coupled with the transport of Na(+) ions from the cytoplasm to the periplasm. The first step is catalyzed by NqrF, which accepts electrons from NADH and reduces ubiquinone-1 to ubisemiquinone by a one-electron transfer pathway. This chain is Na(+)-translocating NADH-quinone reductase subunit F, found in Chlamydia pneumoniae (Chlamydophila pneumoniae).